The following is a 130-amino-acid chain: Small ribosomal subunit protein uS8 (130 aa).

The protein belongs to the universal ribosomal protein uS8 family. In terms of assembly, part of the 30S ribosomal subunit.

In terms of biological role, one of the primary rRNA binding proteins, it binds directly to 16S rRNA central domain where it helps coordinate assembly of the platform of the 30S subunit. The sequence is that of Small ribosomal subunit protein uS8 from Halobacterium salinarum (strain ATCC 29341 / DSM 671 / R1).